The primary structure comprises 226 residues: Leucyl/phenylalanyl-tRNA--protein transferase (226 aa).

This sequence belongs to the L/F-transferase family.

It localises to the cytoplasm. The catalysed reaction is N-terminal L-lysyl-[protein] + L-leucyl-tRNA(Leu) = N-terminal L-leucyl-L-lysyl-[protein] + tRNA(Leu) + H(+). The enzyme catalyses N-terminal L-arginyl-[protein] + L-leucyl-tRNA(Leu) = N-terminal L-leucyl-L-arginyl-[protein] + tRNA(Leu) + H(+). It catalyses the reaction L-phenylalanyl-tRNA(Phe) + an N-terminal L-alpha-aminoacyl-[protein] = an N-terminal L-phenylalanyl-L-alpha-aminoacyl-[protein] + tRNA(Phe). Functions in the N-end rule pathway of protein degradation where it conjugates Leu, Phe and, less efficiently, Met from aminoacyl-tRNAs to the N-termini of proteins containing an N-terminal arginine or lysine. The protein is Leucyl/phenylalanyl-tRNA--protein transferase of Pseudomonas aeruginosa (strain LESB58).